The sequence spans 200 residues: Ribonuclease T2 (200 aa).

An intrachain disulfide couples cysteine 17 to cysteine 22. The active site involves histidine 32. Cysteine 42 and cysteine 89 form a disulfide bridge. N-linked (GlcNAc...) asparagine glycans are attached at residues asparagine 43 and asparagine 73. Active-site residues include glutamate 82 and histidine 86. Asparagine 116 is a glycosylation site (N-linked (GlcNAc...) asparagine). 2 disulfide bridges follow: cysteine 152/cysteine 188 and cysteine 170/cysteine 180.

Belongs to the RNase T2 family.

The protein localises to the secreted. The protein resides in the lysosome lumen. It is found in the endoplasmic reticulum lumen. Its subcellular location is the mitochondrion intermembrane space. It carries out the reaction a ribonucleotidyl-ribonucleotide-RNA + H2O = a 3'-end 3'-phospho-ribonucleotide-RNA + a 5'-end dephospho-ribonucleoside-RNA + H(+). The enzyme catalyses an adenylyl-uridine-RNA = a 3'-end 2',3'-cyclophospho-AMP-RNA + a 5'-end dephospho-uridine-RNA. It catalyses the reaction a guanylyl-uridine-RNA = a 3'-end 2',3'-cyclophospho-GMP-RNA + a 5'-end dephospho-uridine-RNA. Inhibited by Zn(2+) and Cu(2+). Functionally, ribonuclease that plays an essential role in innate immune response by recognizing and degrading RNAs from microbial pathogens that are subsequently sensed by TLR8. Cleaves preferentially single-stranded RNA molecules between purine and uridine residues, which critically contributes to the supply of catabolic uridine and the generation of purine-2',3'-cyclophosphate-terminated oligoribonucleotides. In turn, RNase T2 degradation products promote the RNA-dependent activation of TLR8. In plasmacytoid dendritic cells, it cooperates with PLD3 or PLD4 5'-&gt;3' exonucleases to process RNA fragments and release 2',3'-cyclic guanosine monophosphate (2',3'-cGMP), a potent stimulatory ligand for TLR7. Also plays a key role in degradation of mitochondrial RNA and processing of non-coding RNA imported from the cytosol into mitochondria. Participates as well in degradation of mitochondrion-associated cytosolic rRNAs. The sequence is that of Ribonuclease T2 (RNASET2) from Sus scrofa (Pig).